A 376-amino-acid chain; its full sequence is Lipid-A-disaccharide synthase (376 aa).

Belongs to the LpxB family.

The enzyme catalyses a lipid X + a UDP-2-N,3-O-bis[(3R)-3-hydroxyacyl]-alpha-D-glucosamine = a lipid A disaccharide + UDP + H(+). Its pathway is bacterial outer membrane biogenesis; LPS lipid A biosynthesis. Functionally, condensation of UDP-2,3-diacylglucosamine and 2,3-diacylglucosamine-1-phosphate to form lipid A disaccharide, a precursor of lipid A, a phosphorylated glycolipid that anchors the lipopolysaccharide to the outer membrane of the cell. The polypeptide is Lipid-A-disaccharide synthase (Hydrogenovibrio crunogenus (strain DSM 25203 / XCL-2) (Thiomicrospira crunogena)).